Consider the following 972-residue polypeptide: Hemoglobin and hemoglobin-haptoglobin-binding protein (972 aa).

The first 22 residues, 1-22, serve as a signal peptide directing secretion; the sequence is MKANKLSAITLCILGYAHTVYA. The TonB box signature appears at 32–39; it reads ETIVVSSE. A TBDR plug domain is found at 38-167; that stretch reads SEDDSVHNKN…LGGTVSFESK (130 aa). Residues 175 to 972 form the TBDR beta-barrel domain; sequence DKNYHFGYKT…NFRVNAEITF (798 aa). Residues 955 to 972 carry the TonB C-terminal box motif; that stretch reads KRFNAPGRNFRVNAEITF.

This sequence belongs to the TonB-dependent receptor family. Hemoglobin/haptoglobin binding protein subfamily.

It localises to the cell outer membrane. Functionally, acts as a receptor for hemoglobin or the hemoglobin/haptoglobin complex of the host and is required for heme uptake. May be involved in virulence. This chain is Hemoglobin and hemoglobin-haptoglobin-binding protein, found in Haemophilus ducreyi (strain 35000HP / ATCC 700724).